The chain runs to 202 residues: Guanylate kinase (202 aa).

The region spanning 18 to 200 (LKPVVVFGPS…AYKQLEAICL (183 aa)) is the Guanylate kinase-like domain. 25 to 32 (GPSGVGKS) contributes to the ATP binding site.

Belongs to the guanylate kinase family.

It catalyses the reaction GMP + ATP = GDP + ADP. Essential for recycling GMP and indirectly, cGMP. The polypeptide is Guanylate kinase (Schizosaccharomyces pombe (strain 972 / ATCC 24843) (Fission yeast)).